A 100-amino-acid polypeptide reads, in one-letter code: uncharacterized protein (100 aa).

A run of 3 helical transmembrane segments spans residues 11 to 33 (VWSI…SVLM), 45 to 64 (WMLA…SLVY), and 68 to 90 (WEGA…GYLI).

It is found in the cell membrane. This is an uncharacterized protein from Bacillus subtilis (strain 168).